A 151-amino-acid polypeptide reads, in one-letter code: 3-hydroxyacyl-[acyl-carrier-protein] dehydratase FabZ (151 aa).

His-54 is a catalytic residue.

This sequence belongs to the thioester dehydratase family. FabZ subfamily.

It is found in the cytoplasm. It carries out the reaction a (3R)-hydroxyacyl-[ACP] = a (2E)-enoyl-[ACP] + H2O. Its function is as follows. Involved in unsaturated fatty acids biosynthesis. Catalyzes the dehydration of short chain beta-hydroxyacyl-ACPs and long chain saturated and unsaturated beta-hydroxyacyl-ACPs. This is 3-hydroxyacyl-[acyl-carrier-protein] dehydratase FabZ from Sodalis glossinidius (strain morsitans).